Here is a 321-residue protein sequence, read N- to C-terminus: Probable UDP-sugar transporter protein SLC35A4 (321 aa).

The Cytoplasmic segment spans residues 1-22 (MYSVNIEPDGSNHSPSRKRLKQ). Residues 23–43 (ILWGLMLVLSVTIYGSHAPLI) form a helical membrane-spanning segment. The Lumenal segment spans residues 44–56 (YLCKVNGEIPFSS). Residues 57 to 77 (SAVVLLIELSKFVISLVFFLI) traverse the membrane as a helical segment. At 78-91 (QDWKSLKASVSWHL) the chain is on the cytoplasmic side. A helical transmembrane segment spans residues 92-112 (AAPYAVPAVLYGANNNLVVYI). Topologically, residues 113–119 (QHFMDPS) are lumenal. A helical membrane pass occupies residues 120-140 (SFQVLSNLKIVSTAVLYSLFL). Over 141–149 (RQRLSVRRW) the chain is Cytoplasmic. The chain crosses the membrane as a helical span at residues 150–170 (LSVFLLLAAGVFYSYGGIQDL). Topologically, residues 171-180 (EKVSSDTNLY) are lumenal. The helical transmembrane segment at 181 to 201 (VTLPGLLLMLAYCLISGLSAV) threads the bilayer. Residues 202-211 (YTEMTLKTQK) lie on the Cytoplasmic side of the membrane. The helical transmembrane segment at 212–232 (IPLNMQNLYLYSFGIIINLTA) threads the bilayer. The Lumenal portion of the chain corresponds to 233 to 247 (HLTSSKNSDFFDGFS). A helical membrane pass occupies residues 248-268 (VWVWVIILSQALNGLIMSLVM). The Cytoplasmic segment spans residues 269–321 (KLSNNITRLFIISFSMLANGFLSFILFQLQLTALFFLAVVLIGLAVYMYYGMK).

It belongs to the nucleotide-sugar transporter family. SLC35A subfamily.

Its subcellular location is the golgi apparatus membrane. The enzyme catalyses CDP-L-ribitol(in) + CDP(out) = CDP-L-ribitol(out) + CDP(in). Mediates the transport of CDP-ribitol. Does not exhibit CMP-sialic acid, UDP-galactose and UDP-N-acetylglucosamine transport activity. The sequence is that of Probable UDP-sugar transporter protein SLC35A4 from Xenopus tropicalis (Western clawed frog).